The sequence spans 102 residues: YcgL domain-containing protein MS1047 (102 aa).

In terms of domain architecture, YcgL spans Met-1–Lys-85.

The chain is YcgL domain-containing protein MS1047 from Mannheimia succiniciproducens (strain KCTC 0769BP / MBEL55E).